Consider the following 365-residue polypeptide: tRNA-specific 2-thiouridylase MnmA (365 aa).

ATP contacts are provided by residues 9-16 (GLSGGVDS) and Met-35. Residues 95 to 97 (NPD) form an interaction with target base in tRNA region. Cys-100 serves as the catalytic Nucleophile. A disulfide bond links Cys-100 and Cys-196. Position 124 (Gly-124) interacts with ATP. Residues 146–148 (KDQ) form an interaction with tRNA region. Cys-196 serves as the catalytic Cysteine persulfide intermediate. Residues 315 to 316 (RY) are interaction with tRNA.

Belongs to the MnmA/TRMU family.

The protein localises to the cytoplasm. The enzyme catalyses S-sulfanyl-L-cysteinyl-[protein] + uridine(34) in tRNA + AH2 + ATP = 2-thiouridine(34) in tRNA + L-cysteinyl-[protein] + A + AMP + diphosphate + H(+). Functionally, catalyzes the 2-thiolation of uridine at the wobble position (U34) of tRNA, leading to the formation of s(2)U34. The protein is tRNA-specific 2-thiouridylase MnmA of Dechloromonas aromatica (strain RCB).